A 489-amino-acid polypeptide reads, in one-letter code: MYKFSAIEIRDQFIRGDVSASAITQHYLNRIAKYDQKIGAFLSVYEEQAMMQAKQLDQKRLANQPLGKLAGIPIAIKDNILVKGEISTCGSKFLTNFKSPYQASVIEYLLAEGAVIIGKTNMDEFAMGSSTENSALQKTSNPWNLKCTPGGSSGGSAAAVAGRLSPLSLGSDTGGSVRLPASFCGVVGFKPTYGRVSRFGLVAYGSSLDQIGPLATNTADTALLMEVIGRHCPKDSTSIALGPEDYLSQFKDSIAGMKIGVPWEFLENLADEPKKIFQQSVNLMKQLGAEIVDIDLSILKYSLAVYYILATAEASTNLARFDGIRYGQRSPKAKTLEEVYDFSKEEGFGAEVKRRILLGTYVLSAGYQDAYYKKAQKVRTLILRSYKEAFAKCDLIASPVSPFAAFEIGAIKDPLQMYLEDIYTIGINLAGLPAVSIPNGFSKDGKPMGLQLIGAQKHDREVLNAAHILEKSLAFHPAIPELVKEETSA.

Active-site charge relay system residues include lysine 77 and serine 152. The Acyl-ester intermediate role is filled by serine 176.

This sequence belongs to the amidase family. GatA subfamily. As to quaternary structure, heterotrimer of A, B and C subunits.

The catalysed reaction is L-glutamyl-tRNA(Gln) + L-glutamine + ATP + H2O = L-glutaminyl-tRNA(Gln) + L-glutamate + ADP + phosphate + H(+). In terms of biological role, allows the formation of correctly charged Gln-tRNA(Gln) through the transamidation of misacylated Glu-tRNA(Gln) in organisms which lack glutaminyl-tRNA synthetase. The reaction takes place in the presence of glutamine and ATP through an activated gamma-phospho-Glu-tRNA(Gln). In Protochlamydia amoebophila (strain UWE25), this protein is Glutamyl-tRNA(Gln) amidotransferase subunit A.